A 421-amino-acid polypeptide reads, in one-letter code: MHRFFKSEFFNFEFIRILSAAPYGGAEIAECLVAAGQITNDDPESWHRAWIIQADKAKALGDEALHSGDTVSARRAYLRASNYYRASGYMFHDRPGAPDARVLPLAQQVLDTYALTLPLLDTGEASQLKIPFENYQLAAYLYLPRDRTKPVPVLLSLGGADSIQEELYYVYAASGPQLGYAVLTFEGPGQGITLRRDKMHMRPDWEVVVGRVLDFLTAYMQQNPSVQLDLSRVAVVGASMGGYYALRAAVDPRIGACVSIDPFYDMWDFVRNHVSPALLNAWNAGWVPSRVVNGIMSMAMAASFQAKWEVGLAMWFFGVDSPTQTLRHMMKYTLARADGTSRLDQVKCPVLVSGATQSLYLEPESDVLRVFDALAHLGDERREIWIARSPEEGGLQAKIGAIGLVVQRTFRFLDQHLNVTR.

The Nucleophile role is filled by Ser-239.

The protein belongs to the AB hydrolase superfamily. FUS2 hydrolase family. As to quaternary structure, homodimer.

It participates in secondary metabolite biosynthesis. Its function is as follows. Hydrolyase; part of the gene cluster that mediates the biosynthesis of oxaleimides, cytotoxic compounds containing an unusual disubstituted succinimide moiety. The first step of the pathway is provided by the HR-PKS poxF that serves in a new mode of collaborative biosynthesis with the PKS-NRPS poxE, by providing the olefin containing amino acid substrate via the synthesis of an ACP-bound dec-4-enoate. The cytochrome P450 monooxygenase poxM-catalyzed oxidation at the alpha-position creates the enzyme-bound 2-hydroxydec-4-enoyl-ACP thioester, which may be prone to spontaneous hydrolysis to yield 2-hydroxydec-4-enoic acid due to increased electrophilicity of the carbonyl. 2-hydroxydec-4-enoic acid can then be further oxidized by poxM to yield the alpha-ketoacid 2-oxodec-4-enoicacid, which is reductively aminated by the aminotransferase poxL to yield (S,E)-2-aminodec-4-enoic acid. The Hybrid PKS-NRPS synthetase poxE then performs condensation between the octaketide product of its PKS modules and the amino group of (S,E)-2-aminodec-4-enoic acid which is activated and incorporated by the adenylation domain. The resulting aminoacyl product can be cyclized by the Diels-Alderase PoxQ and reductively released by the reductive (R) domain of poxE to yield an aldehyde intermediate. The released aldehyde is then substrate for a Knoevenagel condensation by the hydrolyase poxO followed by an oxidation at the 5-position of the pyrrolidone ring. The presence of the olefin from the amino acid building block allows for migration of the substituted allyl group to occur. This allylic transposition reaction takes place in a conjugate addition, semipinacol-like fashion to yield a succinimide intermediate. Iterative two-electron oxidations of the C7 methyl of the succinimide intermediate to the carboxylic acid can be catalyzed by one of two remaining cytochrome P450 monooxygenasess poxC or poxD to yield oxaleimide A. Subsequent oxidation yields the maleimide scaffold oxaleimide I. Both oxaleimide A and oxaleimide I can undergo oxidative modifications in the decalin ring to yield the series of products oxaleimides B to H. This chain is Hydrolyase poxO, found in Penicillium oxalicum (strain 114-2 / CGMCC 5302) (Penicillium decumbens).